Consider the following 731-residue polypeptide: MSGSRQAGSGSAGTSPGSSAASSVTSASSSLSSSPSPPSVAVSAAALVSGGVAQAAGSGGLGGPVRPVLVAPAVSGSGGGAVSTGLSRHSCAARPSAGVGGSSSSLGSGSRKRPLLAPLCNGLINSYEDKSNDFVCPICFDMIEEAYMTKCGHSFCYKCIHQSLEDNNRCPKCNYVVDNIDHLYPNFLVNELILKQKQRFEEKRFKLDHSVSSTNGHRWQIFQDWLGTDQDNLDLANVNLMLELLVQKKKQLEAESHAAQLQILMEFLKVARRNKREQLEQIQKELSVLEEDIKRVEEMSGLYSPVSEDSTVPQFEAPSPSHSSIIDSTEYSQPPGFSGSSQTKKQPWYNSTLASRRKRLTAHFEDLEQCYFSTRMSRISDDSRTASQLDEFQECLSKFTRYNSVRPLATLSYASDLYNGSSIVSSIEFDRDCDYFAIAGVTKKIKVYEYDTVIQDAVDIHYPENEMTCNSKISCISWSSYHKNLLASSDYEGTVILWDGFTGQRSKVYQEHEKRCWSVDFNLMDPKLLASGSDDAKVKLWSTNLDNSVASIEAKANVCCVKFSPSSRYHLAFGCADHCVHYYDLRNTKQPIMVFKGHRKAVSYAKFVSGEEIVSASTDSQLKLWNVGKPYCLRSFKGHINEKNFVGLASNGDYIACGSENNSLYLYYKGLSKTLLTFKFDTVKSVLDKDRKEDDTNEFVSAVCWRALPDGESNVLIAANSQGTIKVLELV.

The disordered stretch occupies residues 1–40 (MSGSRQAGSGSAGTSPGSSAASSVTSASSSLSSSPSPPSV). The Nuclear localization signal 1 motif lies at 109–113 (GSRKR). The RING-type zinc finger occupies 136-174 (CPICFDMIEEAYMTKCGHSFCYKCIHQSLEDNNRCPKCN). Residues 195 to 206 (KQKQRFEEKRFK) carry the Nuclear localization signal 2 motif. Residues 233–301 (LDLANVNLML…DIKRVEEMSG (69 aa)) adopt a coiled-coil conformation. Residues 235 to 245 (LANVNLMLELL) carry the Nuclear export signal motif. The interval 305 to 325 (PVSEDSTVPQFEAPSPSHSSI) is disordered. WD repeat units lie at residues 419–458 (NGSSIVSSIEFDRDCDYFAIAGVTKKIKVYEYDTVIQDAV), 468–508 (TCNS…RSKV), 511–551 (EHEK…SVAS), 553–593 (EAKA…QPIM), 597–635 (GHRKAVSYAKFVSGEEIVSASTDSQLKLWNVGKPYCLRS), 638–677 (GHINEKNFVGLASNGDYIACGSENNSLYLYYKGLSKTLLT), and 691–729 (RKEDDTNEFVSAVCWRALPDGESNVLIAANSQGTIKVLE). The segment at 643–645 (KNF) is interaction with TRIB1.

It belongs to the COP1 family. Homodimer. Homodimerization is mediated by the coiled coil domain. Component of the DCX DET1-COP1 ubiquitin ligase complex at least composed of RBX1, DET1, DDB1, CUL4A and COP1. Isoform 2 does not interact with CUL4A but still binds to RBX1, suggesting that the interaction may be mediated by another cullin protein. Isoform 1 and isoform 2 interact with CUL5 but not with CUL1, CUL2 not CUL3. Interacts with bZIP transcription factors JUN, JUNB and JUND but not with FOS, ATF2 nor XBP1. Interacts with p53 (TP53). Interacts with COPS6; this interaction stabilizes RFWD2 through reducing its auto-ubiquitination and decelerating its turnover rate. Interacts with SFN; this interaction leads to SFN degradation. Isoform 4 forms heterodimers with isoform 1, preventing its association with DET1. Interacts with p53/TP53 and MTA1. Interacts with TRIB1 (via C-terminus) and TRIB2. Autoubiquitinated. MTA1 destabilizes it by promoting its autoubiquitination. In terms of tissue distribution, ubiquitously expressed at low level. Expressed at higher level in testis, placenta, skeletal muscle and heart.

It is found in the nucleus speckle. It localises to the cytoplasm. It catalyses the reaction S-ubiquitinyl-[E2 ubiquitin-conjugating enzyme]-L-cysteine + [acceptor protein]-L-lysine = [E2 ubiquitin-conjugating enzyme]-L-cysteine + N(6)-ubiquitinyl-[acceptor protein]-L-lysine.. The protein operates within protein modification; protein ubiquitination. With respect to regulation, TRIB1 competes with substrates for RFWD2 binding. E3 ubiquitin-protein ligase that mediates ubiquitination and subsequent proteasomal degradation of target proteins. E3 ubiquitin ligases accept ubiquitin from an E2 ubiquitin-conjugating enzyme in the form of a thioester and then directly transfers the ubiquitin to targeted substrates. Involved in JUN ubiquitination and degradation. Directly involved in p53 (TP53) ubiquitination and degradation, thereby abolishing p53-dependent transcription and apoptosis. Ubiquitinates p53 independently of MDM2 or RCHY1. Probably mediates E3 ubiquitin ligase activity by functioning as the essential RING domain subunit of larger E3 complexes. In contrast, it does not constitute the catalytic RING subunit in the DCX DET1-COP1 complex that negatively regulates JUN, the ubiquitin ligase activity being mediated by RBX1. Involved in 14-3-3 protein sigma/SFN ubiquitination and proteasomal degradation, leading to AKT activation and promotion of cell survival. Ubiquitinates MTA1 leading to its proteasomal degradation. Upon binding to TRIB1, ubiquitinates CEBPA, which lacks a canonical COP1-binding motif. This chain is E3 ubiquitin-protein ligase COP1, found in Homo sapiens (Human).